We begin with the raw amino-acid sequence, 103 residues long: Large ribosomal subunit protein bL21 (103 aa).

It belongs to the bacterial ribosomal protein bL21 family. As to quaternary structure, part of the 50S ribosomal subunit. Contacts protein L20.

In terms of biological role, this protein binds to 23S rRNA in the presence of protein L20. This chain is Large ribosomal subunit protein bL21, found in Polaromonas naphthalenivorans (strain CJ2).